Reading from the N-terminus, the 77-residue chain is Acyl carrier protein (77 aa).

One can recognise a Carrier domain in the interval S2–V77. S37 is subject to O-(pantetheine 4'-phosphoryl)serine.

This sequence belongs to the acyl carrier protein (ACP) family. Post-translationally, 4'-phosphopantetheine is transferred from CoA to a specific serine of apo-ACP by AcpS. This modification is essential for activity because fatty acids are bound in thioester linkage to the sulfhydryl of the prosthetic group.

It localises to the cytoplasm. Its pathway is lipid metabolism; fatty acid biosynthesis. Carrier of the growing fatty acid chain in fatty acid biosynthesis. The sequence is that of Acyl carrier protein from Paracoccus denitrificans (strain Pd 1222).